Reading from the N-terminus, the 121-residue chain is Large ribosomal subunit protein bL19 (121 aa).

This sequence belongs to the bacterial ribosomal protein bL19 family.

In terms of biological role, this protein is located at the 30S-50S ribosomal subunit interface and may play a role in the structure and function of the aminoacyl-tRNA binding site. This is Large ribosomal subunit protein bL19 from Chlorobium phaeovibrioides (strain DSM 265 / 1930) (Prosthecochloris vibrioformis (strain DSM 265)).